We begin with the raw amino-acid sequence, 249 residues long: Probable transcriptional regulatory protein CYA_2259 (249 aa).

It belongs to the TACO1 family.

The protein resides in the cytoplasm. In Synechococcus sp. (strain JA-3-3Ab) (Cyanobacteria bacterium Yellowstone A-Prime), this protein is Probable transcriptional regulatory protein CYA_2259.